The primary structure comprises 105 residues: Protein SMALL AUXIN UP-REGULATED RNA 16 (105 aa).

Belongs to the ARG7 family. Expressed in etiolated hypocotyls, cotyledons, leaves, flowers and siliques.

The protein localises to the cell membrane. Functionally, provide a mechanistic link between auxin and plasma membrane H(+)-ATPases (PM H(+)-ATPases, e.g. AHA1 and AHA2), and triggers PM H(+)-ATPases activity by promoting phosphorylation of their C-terminal autoinhibitory domain as a result of PP2C-D subfamily of type 2C phosphatases inhibition, thus leading to the acidification of the apoplast and the facilitation of solutes and water uptake to drive cell expansion. Triggers plant growth probably by promoting cell elongation. Regulates branch angles and bending. The protein is Protein SMALL AUXIN UP-REGULATED RNA 16 of Arabidopsis thaliana (Mouse-ear cress).